We begin with the raw amino-acid sequence, 80 residues long: Putative DNA-directed RNA polymerase subunit omega (80 aa).

Belongs to the RNA polymerase subunit omega family.

Its subcellular location is the plastid. The protein localises to the chloroplast. The catalysed reaction is RNA(n) + a ribonucleoside 5'-triphosphate = RNA(n+1) + diphosphate. Functionally, may be involved in RNA polymerase activity. In Gracilaria tenuistipitata var. liui (Red alga), this protein is Putative DNA-directed RNA polymerase subunit omega.